A 266-amino-acid chain; its full sequence is Imidazole glycerol phosphate synthase subunit HisF (266 aa).

Active-site residues include aspartate 11 and aspartate 130.

The protein belongs to the HisA/HisF family. In terms of assembly, heterodimer of HisH and HisF.

Its subcellular location is the cytoplasm. It carries out the reaction 5-[(5-phospho-1-deoxy-D-ribulos-1-ylimino)methylamino]-1-(5-phospho-beta-D-ribosyl)imidazole-4-carboxamide + L-glutamine = D-erythro-1-(imidazol-4-yl)glycerol 3-phosphate + 5-amino-1-(5-phospho-beta-D-ribosyl)imidazole-4-carboxamide + L-glutamate + H(+). It functions in the pathway amino-acid biosynthesis; L-histidine biosynthesis; L-histidine from 5-phospho-alpha-D-ribose 1-diphosphate: step 5/9. Functionally, IGPS catalyzes the conversion of PRFAR and glutamine to IGP, AICAR and glutamate. The HisF subunit catalyzes the cyclization activity that produces IGP and AICAR from PRFAR using the ammonia provided by the HisH subunit. The protein is Imidazole glycerol phosphate synthase subunit HisF of Verminephrobacter eiseniae (strain EF01-2).